Here is a 100-residue protein sequence, read N- to C-terminus: Small ribosomal subunit protein uS14c (100 aa).

Belongs to the universal ribosomal protein uS14 family. In terms of assembly, part of the 30S ribosomal subunit.

It localises to the plastid. The protein localises to the chloroplast. In terms of biological role, binds 16S rRNA, required for the assembly of 30S particles. The sequence is that of Small ribosomal subunit protein uS14c from Tupiella akineta (Green alga).